The following is a 185-amino-acid chain: Elongation factor P (185 aa).

It belongs to the elongation factor P family.

It is found in the cytoplasm. It functions in the pathway protein biosynthesis; polypeptide chain elongation. Involved in peptide bond synthesis. Stimulates efficient translation and peptide-bond synthesis on native or reconstituted 70S ribosomes in vitro. Probably functions indirectly by altering the affinity of the ribosome for aminoacyl-tRNA, thus increasing their reactivity as acceptors for peptidyl transferase. This Endomicrobium trichonymphae protein is Elongation factor P.